The chain runs to 190 residues: Elongation factor P-like protein (190 aa).

The protein belongs to the elongation factor P family.

This is Elongation factor P-like protein from Klebsiella pneumoniae subsp. pneumoniae (strain ATCC 700721 / MGH 78578).